We begin with the raw amino-acid sequence, 92 residues long: cAMP-dependent protein kinase inhibitor beta (92 aa).

Residues 1–26 (MGGGTSPEAQQDSVMRTDSSEMTDVE) are disordered. The segment covering 7-26 (PEAQQDSVMRTDSSEMTDVE) has biased composition (polar residues). At Ser-56 the chain carries Phosphoserine. Basic and acidic residues predominate over residues 70–82 (EDAKTKNEEKDQG). A disordered region spans residues 70 to 92 (EDAKTKNEEKDQGQPKTPLNEGK).

The protein belongs to the PKI family.

Extremely potent competitive inhibitor of cAMP-dependent protein kinase activity, this protein interacts with the catalytic subunit of the enzyme after the cAMP-induced dissociation of its regulatory chains. The chain is cAMP-dependent protein kinase inhibitor beta (Pkib) from Mus musculus (Mouse).